The chain runs to 187 residues: Probable RNA 2'-phosphotransferase (187 aa).

The protein belongs to the KptA/TPT1 family.

Functionally, removes the 2'-phosphate from RNA via an intermediate in which the phosphate is ADP-ribosylated by NAD followed by a presumed transesterification to release the RNA and generate ADP-ribose 1''-2''-cyclic phosphate (APPR&gt;P). May function as an ADP-ribosylase. The chain is Probable RNA 2'-phosphotransferase from Pseudomonas syringae pv. tomato (strain ATCC BAA-871 / DC3000).